The sequence spans 380 residues: GATOR1 complex protein NPRL2 (380 aa).

The segment at 1 to 133 (MGSSCRIECI…SKQKLVPIMT (133 aa)) is interaction with PDPK1. R78 serves as a coordination point for GDP. Asymmetric dimethylarginine is present on R78. Glycyl lysine isopeptide (Lys-Gly) (interchain with G-Cter in ubiquitin) cross-links involve residues K158 and K357.

The protein belongs to the NPR2 family. As to quaternary structure, within the GATOR complex, component of the GATOR1 subcomplex, made of DEPDC5, NPRL2 and NPRL3. GATOR1 mediates the strong interaction of the GATOR complex with small GTPases Rag (RagA/RRAGA, RagB/RRAGB, RagC/RRAGC and/or RagD/RRAGD) heterodimers. GATOR1 interacts with GPR155/LYCHOS; interaction takes place in presence of cholesterol and prevents interaction between GATOR1 and KICSTOR. Interacts with PDPK1. In the presence of abundant amino acids, ubiquitinated at Lys-158 and Lys-357 via 'Lys-6'-linked ubiquitination by the WDR24 component of the GATOR2 complex, thereby inhibiting the GATOR1 complex and promoting mTORC1 activation. Post-translationally, asymmetric dimethylation at Arg-78 by PRMT1 inhibits the GTPase activator activity of the GATOR1 complex and consequently inducing timely mTORC1 activation under methionine-sufficient conditions.

It localises to the lysosome membrane. In terms of biological role, catalytic component of the GATOR1 complex, a multiprotein complex that functions as an inhibitor of the amino acid-sensing branch of the mTORC1 pathway. In response to amino acid depletion, the GATOR1 complex has GTPase activating protein (GAP) activity and strongly increases GTP hydrolysis by RagA/RRAGA (or RagB/RRAGB) within heterodimeric Rag complexes, thereby turning them into their inactive GDP-bound form, releasing mTORC1 from lysosomal surface and inhibiting mTORC1 signaling. In the presence of abundant amino acids, the GATOR1 complex is ubiquitinated and inhibited by GATOR2. Within the GATOR1 complex, NPRL2 constitutes the catalytic subunit that mediates the GTPase activator activity and under methionine-sufficient conditions, the GTPase activator activity is inhibited by PRMT1 through methylation and consequently inducing timely mTORC1 activation. Its function is as follows. Suppresses Src-dependent tyrosine phosphorylation and activation of PDPK1 and its downstream signaling. Down-regulates PDPK1 kinase activity by interfering with tyrosine phosphorylation at 'Tyr-9', 'Tyr-373' and 'Tyr-376' residues. May act as a tumor suppressor. Suppresses cell growth and enhances sensitivity to various anticancer drugs. The polypeptide is GATOR1 complex protein NPRL2 (Bos taurus (Bovine)).